The chain runs to 326 residues: Probable cell division protein WhiA (326 aa).

Positions 275–308 (SLDELGRLADPPMTKDAIAGRIRRLLAMADKRAL) form a DNA-binding region, H-T-H motif.

Belongs to the WhiA family.

Its function is as follows. Involved in cell division and chromosome segregation. This is Probable cell division protein WhiA from Arthrobacter sp. (strain FB24).